Here is a 112-residue protein sequence, read N- to C-terminus: Omega-agatoxin-1A (112 aa).

A signal peptide spans M1 to A19. Positions V20 to R36 are excised as a propeptide. Residues R103–R109 constitute a propeptide, glu-rich.

The protein belongs to the neurotoxin 04 (omega-agtx) family. 01 (type I omega-agtx) subfamily. Heterodimer of two subunits, a major chain and a minor chain, linked by a disulfide bond. In terms of processing, proteolytically processed to yield the major and the minor chains. In terms of tissue distribution, expressed by the venom gland.

Its subcellular location is the secreted. Its function is as follows. Omega-agatoxins are antagonists of voltage-gated calcium channels. They block insect neuromuscular transmission presynaptically. This toxin is a blocker of L-type calcium channels (Cav/CACNA1). This Agelenopsis aperta (North American funnel-web spider) protein is Omega-agatoxin-1A.